The primary structure comprises 231 residues: 2-C-methyl-D-erythritol 2,4-cyclodiphosphate synthase, chloroplastic (231 aa).

The transit peptide at 1–52 (MATSSTQLLLSSSSLFHSQITKKPFLLPATKIGVWRPKKSLSLSCRPSASVS) directs the protein to the chloroplast. A divalent metal cation contacts are provided by Asp-82 and His-84. Residues 82-84 (DLH), 108-109 (HS), 112-120 (DVLLHCVVD), 130-132 (DIG), 135-139 (FPDSD), Asp-139, 174-180 (LQRPKIS), and 205-209 (AKTHE) contribute to the substrate site. His-116 provides a ligand contact to a divalent metal cation.

It belongs to the IspF family. In terms of assembly, homotrimer. It depends on a divalent metal cation as a cofactor.

It is found in the plastid. The protein localises to the chloroplast stroma. The catalysed reaction is 4-CDP-2-C-methyl-D-erythritol 2-phosphate = 2-C-methyl-D-erythritol 2,4-cyclic diphosphate + CMP. It participates in isoprenoid biosynthesis; isopentenyl diphosphate biosynthesis via DXP pathway; isopentenyl diphosphate from 1-deoxy-D-xylulose 5-phosphate: step 4/6. Enzyme of the plastid non-mevalonate pathway for isoprenoid biosynthesis that converts 4-diphosphocytidyl-2C-methyl-D-erythritol 2-phosphate into 2C-methyl-D-erythritol 2,4-cyclodiphosphate and CMP. Is essential for chloroplast development. This is 2-C-methyl-D-erythritol 2,4-cyclodiphosphate synthase, chloroplastic from Arabidopsis thaliana (Mouse-ear cress).